The following is a 424-amino-acid chain: UDP-N-acetylglucosamine 1-carboxyvinyltransferase (424 aa).

A phosphoenolpyruvate-binding site is contributed by 22–23 (KN). Arg93 lines the UDP-N-acetyl-alpha-D-glucosamine pocket. Cys117 functions as the Proton donor in the catalytic mechanism. Cys117 is subject to 2-(S-cysteinyl)pyruvic acid O-phosphothioketal. Residues 122–126 (RPVDL), 162–165 (KVSV), Asp307, and Ile329 contribute to the UDP-N-acetyl-alpha-D-glucosamine site.

It belongs to the EPSP synthase family. MurA subfamily.

The protein resides in the cytoplasm. It carries out the reaction phosphoenolpyruvate + UDP-N-acetyl-alpha-D-glucosamine = UDP-N-acetyl-3-O-(1-carboxyvinyl)-alpha-D-glucosamine + phosphate. It functions in the pathway cell wall biogenesis; peptidoglycan biosynthesis. Cell wall formation. Adds enolpyruvyl to UDP-N-acetylglucosamine. The polypeptide is UDP-N-acetylglucosamine 1-carboxyvinyltransferase (Haemophilus influenzae (strain PittEE)).